Consider the following 432-residue polypeptide: Adenylosuccinate synthetase (432 aa).

Residues 12-18 (GDEGKGK) and 40-42 (GHT) each bind GTP. Asp13 serves as the catalytic Proton acceptor. Residues Asp13 and Gly40 each coordinate Mg(2+). Residues 13–16 (DEGK), 38–41 (NAGH), Thr129, Arg143, Gln224, Thr239, and Arg303 contribute to the IMP site. His41 functions as the Proton donor in the catalytic mechanism. A substrate-binding site is contributed by 299–305 (VTTGRRR). Residues Arg305, 331 to 333 (KLD), and 413 to 415 (GVG) contribute to the GTP site.

It belongs to the adenylosuccinate synthetase family. As to quaternary structure, homodimer. It depends on Mg(2+) as a cofactor.

The protein localises to the cytoplasm. The enzyme catalyses IMP + L-aspartate + GTP = N(6)-(1,2-dicarboxyethyl)-AMP + GDP + phosphate + 2 H(+). Its pathway is purine metabolism; AMP biosynthesis via de novo pathway; AMP from IMP: step 1/2. Plays an important role in the de novo pathway of purine nucleotide biosynthesis. Catalyzes the first committed step in the biosynthesis of AMP from IMP. The protein is Adenylosuccinate synthetase of Mycobacterium marinum (strain ATCC BAA-535 / M).